Consider the following 457-residue polypeptide: Putative purine-cytosine permease YxlA (457 aa).

The next 12 helical transmembrane spans lie at 24–44 (FPVW…TIPV), 50–70 (LFWS…FMAS), 90–110 (FGVI…LGFF), 127–147 (IPGS…TIFG), 164–184 (AVFF…GSWI), 192–212 (IFLV…PYVA), 228–248 (FWYS…LGAL), 264–284 (IVQL…FGQM), 316–336 (IIMI…GQSN), 341–361 (FLNF…INLV), 392–412 (IAFV…FYIG), and 420–440 (GGDI…YVLM).

Belongs to the purine-cytosine permease (2.A.39) family.

The protein localises to the cell membrane. This chain is Putative purine-cytosine permease YxlA (yxlA), found in Bacillus subtilis (strain 168).